Reading from the N-terminus, the 357-residue chain is MVDQATLDKLEAGFKKLQEASDCKSLLKKHLTKDVFDSIKNKKTGMGATLLDVIQSGVENLDSGVGIYAPDAESYRTFGPLFDPIIDDYHGGFKLTDKHPPKEWGDINTLVDLDPGGQFIISTRVRCGRSLQGYPFNPCLTAEQYKEMEEKVSSTLSSMEDELKGTYYPLTGMSKATQQQLIDDHFLFKEGDRFLQTANACRYWPTGRGIFHNDAKTFLVWVNEEDHLRIISMQKGGDLKTVYKRLVTAVDNIESKLPFSHDDRFGFLTFCPTNLGTTMRASVHIQLPKLAKDRKVLEDIASKFNLQVRGTRGEHTESEGGVYDISNKRRLGLTEYQAVREMQDGILEMIKMEKAAA.

In terms of domain architecture, Phosphagen kinase N-terminal spans 9–91 (KLEAGFKKLQ…FDPIIDDYHG (83 aa)). 64-68 (GVGIY) contributes to the substrate binding site. A Phosphagen kinase C-terminal domain is found at 119-356 (FIISTRVRCG…LEMIKMEKAA (238 aa)). ATP is bound by residues 122-126 (STRVR) and H185. Residue E225 coordinates substrate. Residue R229 participates in ATP binding. C271 serves as a coordination point for substrate. ATP contacts are provided by residues 280 to 284 (RASVH) and 309 to 314 (RGTRGE). E314 lines the substrate pocket.

The protein belongs to the ATP:guanido phosphotransferase family. As to quaternary structure, monomer.

Its subcellular location is the cytoplasm. It catalyses the reaction L-arginine + ATP = N(omega)-phospho-L-arginine + ADP + H(+). Its function is as follows. Catalyzes the reversible transfer of the terminal phosphoryl group of ATP to L-arginine. This is Arginine kinase from Limulus polyphemus (Atlantic horseshoe crab).